The primary structure comprises 227 residues: Heptaprenylglyceryl phosphate synthase (227 aa).

K13 provides a ligand contact to sn-glycerol 1-phosphate. Positions 15 and 41 each coordinate Mg(2+). Sn-glycerol 1-phosphate-binding positions include 159 to 164 (YLEYSG), G189, and 209 to 210 (GN).

It belongs to the GGGP/HepGP synthase family. Group I subfamily. Homodimer. Mg(2+) serves as cofactor.

It carries out the reaction sn-glycerol 1-phosphate + all-trans-heptaprenyl diphosphate = 3-heptaprenyl-sn-glycero-1-phosphate + diphosphate. It participates in membrane lipid metabolism; glycerophospholipid metabolism. In terms of biological role, prenyltransferase that catalyzes in vivo the transfer of the heptaprenyl moiety of heptaprenyl pyrophosphate (HepPP; 35 carbon atoms) to the C3 hydroxyl of sn-glycerol-1-phosphate (G1P), producing heptaprenylglyceryl phosphate (HepGP). This reaction is an ether-bond-formation step in the biosynthesis of archaea-type G1P-based membrane lipids found in Bacillales. The sequence is that of Heptaprenylglyceryl phosphate synthase from Exiguobacterium sibiricum (strain DSM 17290 / CCUG 55495 / CIP 109462 / JCM 13490 / 255-15).